We begin with the raw amino-acid sequence, 221 residues long: UPF0502 protein Sputw3181_2381 (221 aa).

Belongs to the UPF0502 family.

This chain is UPF0502 protein Sputw3181_2381, found in Shewanella sp. (strain W3-18-1).